Consider the following 58-residue polypeptide: Keratin-associated protein 19-6 (58 aa).

It belongs to the KRTAP type 19 family. In terms of assembly, interacts with hair keratins.

In terms of biological role, in the hair cortex, hair keratin intermediate filaments are embedded in an interfilamentous matrix, consisting of hair keratin-associated proteins (KRTAP), which are essential for the formation of a rigid and resistant hair shaft through their extensive disulfide bond cross-linking with abundant cysteine residues of hair keratins. The matrix proteins include the high-sulfur and high-glycine-tyrosine keratins. This is Keratin-associated protein 19-6 (KRTAP19-6) from Homo sapiens (Human).